Reading from the N-terminus, the 151-residue chain is Probable ribonuclease P/MRP protein subunit POP5 (151 aa).

It belongs to the eukaryotic/archaeal RNase P protein component 2 family. Component of nuclear RNase P and RNase MRP ribonucleoproteins. Interacts with GAF1/RPP30.

The protein localises to the nucleus. The protein resides in the nucleolus. Its function is as follows. Essential protein required during embryogenesis. Component of ribonuclease P, a protein complex that generates mature tRNA molecules by cleaving their 5'-ends. Also a component of RNase MRP. In Arabidopsis thaliana (Mouse-ear cress), this protein is Probable ribonuclease P/MRP protein subunit POP5 (EMB1687).